A 264-amino-acid chain; its full sequence is Hydroxyethylthiazole kinase (264 aa).

Met-55 serves as a coordination point for substrate. Residues Arg-130 and Ser-176 each coordinate ATP. A substrate-binding site is contributed by Gly-203.

This sequence belongs to the Thz kinase family. Mg(2+) is required as a cofactor.

The enzyme catalyses 5-(2-hydroxyethyl)-4-methylthiazole + ATP = 4-methyl-5-(2-phosphooxyethyl)-thiazole + ADP + H(+). It functions in the pathway cofactor biosynthesis; thiamine diphosphate biosynthesis; 4-methyl-5-(2-phosphoethyl)-thiazole from 5-(2-hydroxyethyl)-4-methylthiazole: step 1/1. Functionally, catalyzes the phosphorylation of the hydroxyl group of 4-methyl-5-beta-hydroxyethylthiazole (THZ). This chain is Hydroxyethylthiazole kinase, found in Leptospira borgpetersenii serovar Hardjo-bovis (strain JB197).